Here is a 73-residue protein sequence, read N- to C-terminus: MTRILLLLLTFYRYFISPLLGGNNCRFYPTCSKYAKEALNTHGGIKGLWLIFKRIIKCQPLCDGGYDPVPLTK.

It belongs to the UPF0161 family.

It localises to the cell inner membrane. Its function is as follows. Could be involved in insertion of integral membrane proteins into the membrane. This chain is Putative membrane protein insertion efficiency factor, found in Rickettsia bellii (strain RML369-C).